We begin with the raw amino-acid sequence, 584 residues long: Phosphoinositide phospholipase C 7 (584 aa).

The EF-hand-like domain maps to 26–102 (EIKTLFDNYS…NSPLSSLEVH (77 aa)). The PI-PLC X-box domain occupies 103 to 248 (QDMDAPLSHY…LKKRIMISTK (146 aa)). Catalysis depends on residues His118 and His164. Residues 285–318 (DRSVDKNDSNGDDDDDDDDDDDDDDGDDKIKKNA) are disordered. Ser287 carries the post-translational modification Phosphoserine. A compositionally biased stretch (acidic residues) spans 294–311 (NGDDDDDDDDDDDDDDGD). The region spanning 323 to 439 (KHLIAIEAGK…GYIKKPDLLL (117 aa)) is the PI-PLC Y-box domain. A C2 domain is found at 433-566 (KKPDLLLKSN…QGIRAVPLRN (134 aa)).

Ca(2+) serves as cofactor. As to expression, expressed in leaves, roots, flowers and siliques.

The protein resides in the cell membrane. It catalyses the reaction a 1,2-diacyl-sn-glycero-3-phospho-(1D-myo-inositol-4,5-bisphosphate) + H2O = 1D-myo-inositol 1,4,5-trisphosphate + a 1,2-diacyl-sn-glycerol + H(+). Its function is as follows. The production of the second messenger molecules diacylglycerol (DAG) and inositol 1,4,5-trisphosphate (IP3) is mediated by activated phosphatidylinositol-specific phospholipase C enzymes. This is Phosphoinositide phospholipase C 7 (PLC7) from Arabidopsis thaliana (Mouse-ear cress).